Consider the following 1381-residue polypeptide: MASNEGVENRPFPYLTVDADLLSNLRQSAAEGLFHSFDLLVGKDAREAGIKFEVLLGVYTNAIQYVRFLETALAVSCVNTEFKDLSRMTDGKIQFRISVPTIAHGDGRRPSKQRTFIVVKNCHKHHISTEMELSMLDLEILHSIPETPVEYAEYVGAVKTVASALQFGVDALERGLINTVLSVKLRHAPPMFILQTLADPTFTERGFSKTVKSDLIAMFKRHLLEHSFFLDRAENMGSGFSQYVRSRLSEMVAAVSGESVLKGVSTYTTAKGGEPVGGVFIVTDNVLRQLLTFLGEEADNQIMGPSSYASFVVRGENLVTAVSYGRVMRTFEHFMARIVDSPEKAGSTKSDLPAVAAGVEDQPRVPISAAVIKLGNHAVAVESLQKMYNDTQSPYPLNRRMQYSYYFPVGLFMPNPKYTTSAAIKMLDNPTQQLPVEAWIVNKNNLLLAFNLQNALKVLCHPRLHTPAHTLNSLNAAPAPRDRRETYSLQHRRPNHMNVLVIVDEFYDNKYAAPVTDIALKCGLPTEDFLHPSNYDLLRLELHPLYDIYIGRDAGERARHRAVHRLMVGNLPTPLAPAAFQEARGQQFETATSLAHVVDQAVIETVQDTAYDTAYPAFFYVVEAMIHGFEEKFVMNVPLVSLCINTYWERSGRLAFVNSFSMIKFICRHLGNNAISKEAYSMYRKIYGELIALEQALMRLAGSDVVGDESVGQYVCALLDPNLLPPVAYTDIFTHLLTVSDRAPQIIIGNEVYADTLAAPQFIERVGNMDEMAAQFVALYGYRVNGDHDHDFRLHLGPYVDEGHADVLEKIFYYVFLPTCTNAHMCGLGVDFQHVAQTLAYNGPAFSHHFTRDEDILDNLENGTLRDLLEISDLRPTVGMIRDLSASFMTCPTFTRAVRVSVDNDVTQQLAPNPADKRTEQTVLVNGLVAFAFSERTRAVTQCLFHAIPFHMFYGDPRVAATMHQDVATFVMRNPQQRAVEAFNRPEQLFAEYREWHRSPMGKYAAECLPSLVSISGMTAMHIKMSPMAYIAQAKLKIHPGVAMTVVRTDEILSENILFSSRASTSMFIGTPNVSRREARVDAVTFEVHHEMASIDTGLSYSSTMTPARVAAITTDMGIHTQDFFSVFPAEAFGNQQVNDYIKAKVGAQRNGTLLRDPRTYLAGMTNVNGAPGLCHGQQATCEIIVTPVTADVAYFQKSNSPRGRAACVVSCENYNQEVAEGLIYDHSRPDAAYEYRSTVNPWASQLGSLGDIMYNSSYRQTAVPGLYSPCRAFFNKEELLRNNRGLYNMVNEYSQRLGGHPATSNTEVQFVVIAGTDVFLEQPCSFLQEAFPALSASSRALIDEFMSVKQTHAPIHYGHYIIEEVAPVRRILKFGNKVVF.

It belongs to the herpesviridae major capsid protein family. Homomultimer. Makes the hexons and eleven out of twelve pentons. Interacts with triplex proteins 1/TRX1 and 2/TRX2; adjacent capsomers are linked together in groups of three by triplexes, heterotrimeric complexes composed of one molecule of TRX1 and two molecules of TRX2. Interacts with scaffold protein; this interaction allows efficient MCP transport to the host nucleus. Interacts with capsid vertex component 2/CVC2. Interacts with the small capsomere-interacting protein/SCP.

It is found in the virion. The protein resides in the host nucleus. Its function is as follows. Self-assembles to form an icosahedral capsid with a T=16 symmetry, about 200 nm in diameter, and consisting of 150 hexons and 12 pentons (total of 162 capsomers). Hexons form the edges and faces of the capsid and are each composed of six MCP molecules. In contrast, one penton is found at each of the 12 vertices. Eleven of the pentons are MCP pentamers, while the last vertex is occupied by the portal complex. The capsid is surrounded by a layer of proteinaceous material designated the tegument which, in turn, is enclosed in an envelope of host cell-derived lipids containing virus-encoded glycoproteins. The chain is Major capsid protein from Epstein-Barr virus (strain B95-8) (HHV-4).